Consider the following 601-residue polypeptide: Elongation factor 4 (601 aa).

One can recognise a tr-type G domain in the interval 7–189 (DTIRNFSIVA…AIVAKLPPPK (183 aa)). Residues 19-24 (DHGKST) and 136-139 (NKID) each bind GTP.

It belongs to the TRAFAC class translation factor GTPase superfamily. Classic translation factor GTPase family. LepA subfamily.

It is found in the cell inner membrane. The catalysed reaction is GTP + H2O = GDP + phosphate + H(+). Functionally, required for accurate and efficient protein synthesis under certain stress conditions. May act as a fidelity factor of the translation reaction, by catalyzing a one-codon backward translocation of tRNAs on improperly translocated ribosomes. Back-translocation proceeds from a post-translocation (POST) complex to a pre-translocation (PRE) complex, thus giving elongation factor G a second chance to translocate the tRNAs correctly. Binds to ribosomes in a GTP-dependent manner. The protein is Elongation factor 4 of Methylobacterium nodulans (strain LMG 21967 / CNCM I-2342 / ORS 2060).